We begin with the raw amino-acid sequence, 203 residues long: Ribosomal RNA large subunit methyltransferase E (203 aa).

5 residues coordinate S-adenosyl-L-methionine: G59, W61, D79, N95, and D118. Catalysis depends on K158, which acts as the Proton acceptor.

Belongs to the class I-like SAM-binding methyltransferase superfamily. RNA methyltransferase RlmE family.

It localises to the cytoplasm. The catalysed reaction is uridine(2552) in 23S rRNA + S-adenosyl-L-methionine = 2'-O-methyluridine(2552) in 23S rRNA + S-adenosyl-L-homocysteine + H(+). In terms of biological role, specifically methylates the uridine in position 2552 of 23S rRNA at the 2'-O position of the ribose in the fully assembled 50S ribosomal subunit. The sequence is that of Ribosomal RNA large subunit methyltransferase E from Wigglesworthia glossinidia brevipalpis.